Consider the following 666-residue polypeptide: Hybrid PKS-NRPS synthetase pytA (666 aa).

The region spanning 1-340 is the Ketosynthase family 3 (KS3) domain; that stretch reads MDPQQRLLLE…GTNAHAILEE (340 aa). Catalysis depends on for beta-ketoacyl synthase activity residues Cys-87, His-222, and His-260. The tract at residues 455 to 665 is malonyl-CoA:ACP transacylase (MAT) domain; that stretch reads VFTGQGAQWF…VFVHSLVIKR (211 aa). Ser-548 functions as the For malonyltransferase activity in the catalytic mechanism.

This sequence in the C-terminal section; belongs to the NRP synthetase family.

The protein operates within secondary metabolite biosynthesis. Functionally, hybrid PKS-NRPS synthetase; part of the gene cluster that mediates the biosynthesis of pyranterreones, a family of antioxidative compounds. The first step of pyranonigrins biosynthesis is performed by the hybrid PKS-NRPS synthetase pytA that condenses 4 malonyl-CoA units ato the acetyl starter unit by the modular PKS of pytA. The acyl chain is then connected to an L-serine through the amide bond by the modular NRPS of pytA. A tetramic acid is formed and released from the PKS-NRPS pytA to give pyranterreone 5 with the help of the thioesterase pytI. Pyranterreone 5 could be methylated by pytC to afford pyranterreone 6. Both pyranterreones 5 and 6 are subsequently oxidized by the FAD-linked oxidoreductase pytB and the cytochrome P450 monooxygenase pytD to form the fused gamma-pyrone core, resulting in pyranterreones 7 and 11, respectively. The hydroxy group at C-8 of pyranterreones 7 and 11 are dehydrated by the aspartyl protease pytH to form a delta-7 double bond to give pyranterreones 3 and 1, 2 accordingly. The exo-methylene of pyranterreone 3 could be reduced into a pendant methyl by reductase pytE to provide pyranterreone 4, also known as cordylactam. Pyranterreone 4 can be reconverted to pyranterreone 3 through pytB-catalyzed dehydrogenation or further oxidized to pyranterreones 9 and 10. This chain is Hybrid PKS-NRPS synthetase pytA, found in Aspergillus terreus (strain NIH 2624 / FGSC A1156).